The primary structure comprises 882 residues: DNA mismatch repair protein MutS (882 aa).

ATP is bound at residue 640–647 (GPNMGGKS).

It belongs to the DNA mismatch repair MutS family.

In terms of biological role, this protein is involved in the repair of mismatches in DNA. It is possible that it carries out the mismatch recognition step. This protein has a weak ATPase activity. In Albidiferax ferrireducens (strain ATCC BAA-621 / DSM 15236 / T118) (Rhodoferax ferrireducens), this protein is DNA mismatch repair protein MutS.